Reading from the N-terminus, the 242-residue chain is Biosynthetic peptidoglycan transglycosylase (242 aa).

A helical transmembrane segment spans residues 19-39; that stretch reads ILAALAVFWGGGIALFSVVPV.

This sequence belongs to the glycosyltransferase 51 family.

It localises to the cell inner membrane. It carries out the reaction [GlcNAc-(1-&gt;4)-Mur2Ac(oyl-L-Ala-gamma-D-Glu-L-Lys-D-Ala-D-Ala)](n)-di-trans,octa-cis-undecaprenyl diphosphate + beta-D-GlcNAc-(1-&gt;4)-Mur2Ac(oyl-L-Ala-gamma-D-Glu-L-Lys-D-Ala-D-Ala)-di-trans,octa-cis-undecaprenyl diphosphate = [GlcNAc-(1-&gt;4)-Mur2Ac(oyl-L-Ala-gamma-D-Glu-L-Lys-D-Ala-D-Ala)](n+1)-di-trans,octa-cis-undecaprenyl diphosphate + di-trans,octa-cis-undecaprenyl diphosphate + H(+). It participates in cell wall biogenesis; peptidoglycan biosynthesis. Peptidoglycan polymerase that catalyzes glycan chain elongation from lipid-linked precursors. This chain is Biosynthetic peptidoglycan transglycosylase, found in Salmonella paratyphi A (strain ATCC 9150 / SARB42).